A 417-amino-acid chain; its full sequence is Proteasome-activating nucleotidase (417 aa).

The stretch at 24–78 forms a coiled coil; the sequence is SKYLLDRVKQLEERNVRLKEEYRKIELEKKSVENKKVQYEREIRKLTSELDRLKT. Residues 203 to 208 and H342 contribute to the ATP site; that span reads GTGKTL. Residues 415-417 form a docks into pockets in the proteasome alpha-ring to cause gate opening region; sequence MFA.

It belongs to the AAA ATPase family. As to quaternary structure, homohexamer. The hexameric complex has a two-ring architecture resembling a top hat that caps the 20S proteasome core at one or both ends. Upon ATP-binding, the C-terminus of PAN interacts with the alpha-rings of the proteasome core by binding to the intersubunit pockets.

Its subcellular location is the cytoplasm. Functionally, ATPase which is responsible for recognizing, binding, unfolding and translocation of substrate proteins into the archaeal 20S proteasome core particle. Is essential for opening the gate of the 20S proteasome via an interaction with its C-terminus, thereby allowing substrate entry and access to the site of proteolysis. Thus, the C-termini of the proteasomal ATPase function like a 'key in a lock' to induce gate opening and therefore regulate proteolysis. Unfolding activity requires energy from ATP hydrolysis, whereas ATP binding alone promotes ATPase-20S proteasome association which triggers gate opening, and supports translocation of unfolded substrates. The polypeptide is Proteasome-activating nucleotidase (Methanocella arvoryzae (strain DSM 22066 / NBRC 105507 / MRE50)).